We begin with the raw amino-acid sequence, 79 residues long: WAP four-disulfide core domain protein 10A (79 aa).

The N-terminal stretch at 1–21 (MAPQTLLPVLVLCVLLLQAQG) is a signal peptide. The WAP domain occupies 34–79 (LSPEIKVCQQQPKLYLCKHLCESHRDCQANNICCSTYCGNVCMSIL). 4 disulfide bridges follow: cysteine 41-cysteine 67, cysteine 50-cysteine 71, cysteine 54-cysteine 66, and cysteine 60-cysteine 75.

Its subcellular location is the secreted. In Homo sapiens (Human), this protein is WAP four-disulfide core domain protein 10A (WFDC10A).